The sequence spans 540 residues: CUB domain-containing protein 2 (540 aa).

The N-terminal stretch at M1 to A24 is a signal peptide. Residues M25–D516 lie on the Extracellular side of the membrane. Intrachain disulfides connect C30–C56, C83–C106, C145–C171, C198–C218, C257–C283, and C314–C336. 3 consecutive CUB domains span residues C30–D143, C145–G255, and C257–V373. A glycan (N-linked (GlcNAc...) asparagine) is linked at N40. Residue N267 is glycosylated (N-linked (GlcNAc...) asparagine). Residues N377, N435, and N436 are each glycosylated (N-linked (GlcNAc...) asparagine). A helical transmembrane segment spans residues I517–L537. Topologically, residues M538–L540 are cytoplasmic.

It localises to the membrane. This Mus musculus (Mouse) protein is CUB domain-containing protein 2 (Cdcp2).